The primary structure comprises 667 residues: Autophagy-related protein 20 (667 aa).

Positions 1–94 (MKQKKNRFGS…DESFKSTRAN (94 aa)) are disordered. The span at 38–47 (SSSSRSSSTQ) shows a compositional bias: low complexity. Positions 55-67 (SLASVHTSDMHQS) are enriched in polar residues. Residues 76 to 85 (DDNPFLDQDD) are compositionally biased toward acidic residues. The region spanning 185–331 (KLINDRVQIL…DFLDPNNINW (147 aa)) is the PX domain. A 1,2-diacyl-sn-glycero-3-phospho-(1D-myo-inositol-3-phosphate)-binding residues include Arg-222, Ser-224, Lys-248, and Arg-297. The disordered stretch occupies residues 524–562 (ELQRGVQPRNGNTASGASGNDESSVKKPQASKSQSSSYG). Positions 532–545 (RNGNTASGASGNDE) are enriched in polar residues. Residues 549-560 (KKPQASKSQSSS) show a composition bias toward low complexity. Positions 588–652 (QTTMANLIKE…SKYLKDYAKK (65 aa)) form a coiled coil.

It belongs to the sorting nexin family.

It is found in the endosome membrane. Its subcellular location is the preautophagosomal structure membrane. Its function is as follows. Required for cytoplasm to vacuole transport (Cvt), pexophagy and mitophagy. Also involved in endoplasmic reticulum-specific autophagic process and is essential for the survival of cells subjected to severe ER stress. Functions in protein retrieval from the endocytic pathway. The chain is Autophagy-related protein 20 (ATG20) from Vanderwaltozyma polyspora (strain ATCC 22028 / DSM 70294 / BCRC 21397 / CBS 2163 / NBRC 10782 / NRRL Y-8283 / UCD 57-17) (Kluyveromyces polysporus).